The chain runs to 832 residues: Protein monoglycylase TTLL8 (832 aa).

Residues 1-13 (MSCPPTPNPPFRP) show a composition bias toward pro residues. Disordered regions lie at residues 1 to 84 (MSCP…QDLS) and 277 to 304 (GKSK…KLPS). Composition is skewed to basic and acidic residues over residues 46–59 (QLRE…ERKK), 66–75 (DGDHKEENKL), and 280–299 (KKEE…ENPD). Positions 271-624 (YCSKVKGKSK…RKLDRNCDIG (354 aa)) constitute a TTL domain. ATP-binding positions include lysine 397, 403–404 (RG), 435–438 (QKYI), 448–450 (KFD), and 492–493 (CN). Residue arginine 403 coordinates a protein. Serine 495 contacts L-glutamate. Mg(2+)-binding residues include aspartate 570, glutamate 583, and asparagine 585. Position 583 (glutamate 583) interacts with ATP.

Mg(2+) is required as a cofactor. In terms of tissue distribution, highly expressed in testis. Expressed in brain, heart, kidney, liver, lung, muscle, spleen and trachea. Expressed in sperm flagellum. In the brain, specifically expressed in ependymal cilia.

It localises to the cytoplasm. Its subcellular location is the cytoskeleton. The protein resides in the cell projection. It is found in the cilium. The protein localises to the cilium axoneme. It localises to the flagellum axoneme. The catalysed reaction is L-glutamyl-[protein] + glycine + ATP = glycyl-L-glutamyl-[protein] + ADP + phosphate + H(+). Monoglycylase which modifies both tubulin and non-tubulin proteins, adding a single glycine on the gamma-carboxyl groups of specific glutamate residues to generate monoglycine side chains within the C-terminal tail of target proteins. Not involved in elongation step of the polyglycylation reaction. Preferentially monoglycylates alpha-tubulin over beta-tubulin. Together with TTLL3, mediates microtubule glycylation of primary and motile cilia, which is essential for their stability and maintenance. Together with TTLL3, glycylates sperm flagella which regulates axonemal dynein motor activity, thereby controlling flagellar beat, directional sperm swimming and male fertility. Monoglycylates non-tubulin proteins such as ANP32A, ANP32B, SET, NCL and NAP1. This chain is Protein monoglycylase TTLL8, found in Mus musculus (Mouse).